We begin with the raw amino-acid sequence, 506 residues long: 2-isopropylmalate synthase (506 aa).

The 265-residue stretch at 8–272 (LIVFDTTLRD…ETGIQLKEIL (265 aa)) folds into the Pyruvate carboxyltransferase domain. Mn(2+) contacts are provided by D17, H206, H208, and N242. Residues 396–506 (ELEYVAVTVC…YLNAVNKALL (111 aa)) form a regulatory domain region.

It belongs to the alpha-IPM synthase/homocitrate synthase family. LeuA type 1 subfamily. As to quaternary structure, homodimer. Requires Mn(2+) as cofactor.

The protein resides in the cytoplasm. It catalyses the reaction 3-methyl-2-oxobutanoate + acetyl-CoA + H2O = (2S)-2-isopropylmalate + CoA + H(+). Its pathway is amino-acid biosynthesis; L-leucine biosynthesis; L-leucine from 3-methyl-2-oxobutanoate: step 1/4. Functionally, catalyzes the condensation of the acetyl group of acetyl-CoA with 3-methyl-2-oxobutanoate (2-ketoisovalerate) to form 3-carboxy-3-hydroxy-4-methylpentanoate (2-isopropylmalate). The polypeptide is 2-isopropylmalate synthase (Methylacidiphilum infernorum (isolate V4) (Methylokorus infernorum (strain V4))).